Consider the following 580-residue polypeptide: Myb-like protein C (580 aa).

Disordered stretches follow at residues 1–58 (MTMI…YGSN), 73–101 (QYSISSPSPKKRPFNSTMTTSPPTPTLLS), 121–203 (NVYN…SSTN), and 354–380 (SDNDSNQKKKRERIRKSVSRGLRNPPN). Low complexity-rich tracts occupy residues 20-47 (NNNNNNSNNSSNNNSNNNSNNNNNNNNN), 87-101 (NSTMTTSPPTPTLLS), and 126-203 (PHQS…SSTN). Residues 361–371 (KKKRERIRKSV) show a composition bias toward basic residues. HTH myb-type domains lie at 368 to 430 (RKSV…CPAI) and 431 to 482 (RKGS…SREV). 2 consecutive DNA-binding regions (H-T-H motif) follow at residues 402–426 (WKKIAHQIGGGKTGAQCAQHWKRVL) and 454–478 (WKNVASEIRTRTDIQCRYQYFKSCM). One can recognise a Myb-like domain in the interval 484-546 (WSSREDEILQ…ECKTRYFQLN (63 aa)).

It localises to the nucleus. Functionally, transcription activator required for the culmination, at the time of the fruiting body formation. Regulates genes involved in the cell differentiation within the fruiting body. The sequence is that of Myb-like protein C (mybC) from Dictyostelium discoideum (Social amoeba).